The primary structure comprises 868 residues: Translation initiation factor IF-2 (868 aa).

Positions 201–269 (KEEVKPEKVS…GTEKSDKYRE (69 aa)) are disordered. Residues 249–260 (RGGRSKFKKKKG) show a composition bias toward basic residues. Residues 368-537 (GRAPVVTIMG…LLQSEVLELK (170 aa)) enclose the tr-type G domain. Residues 377-384 (GHVDHGKT) are G1. 377–384 (GHVDHGKT) serves as a coordination point for GTP. The interval 402 to 406 (GITQH) is G2. Residues 423–426 (DTPG) form a G3 region. Residues 423-427 (DTPGH) and 477-480 (NKMD) each bind GTP. Residues 477–480 (NKMD) form a G4 region. Residues 513 to 515 (SAK) form a G5 region.

It belongs to the TRAFAC class translation factor GTPase superfamily. Classic translation factor GTPase family. IF-2 subfamily.

Its subcellular location is the cytoplasm. One of the essential components for the initiation of protein synthesis. Protects formylmethionyl-tRNA from spontaneous hydrolysis and promotes its binding to the 30S ribosomal subunits. Also involved in the hydrolysis of GTP during the formation of the 70S ribosomal complex. The polypeptide is Translation initiation factor IF-2 (Legionella pneumophila (strain Corby)).